The primary structure comprises 184 residues: Peptide deformylase (184 aa).

Fe cation contacts are provided by cysteine 98 and histidine 140. Glutamate 141 is an active-site residue. Histidine 144 contributes to the Fe cation binding site.

It belongs to the polypeptide deformylase family. The cofactor is Fe(2+).

The catalysed reaction is N-terminal N-formyl-L-methionyl-[peptide] + H2O = N-terminal L-methionyl-[peptide] + formate. Its function is as follows. Removes the formyl group from the N-terminal Met of newly synthesized proteins. Requires at least a dipeptide for an efficient rate of reaction. N-terminal L-methionine is a prerequisite for activity but the enzyme has broad specificity at other positions. The protein is Peptide deformylase of Bacteroides fragilis (strain ATCC 25285 / DSM 2151 / CCUG 4856 / JCM 11019 / LMG 10263 / NCTC 9343 / Onslow / VPI 2553 / EN-2).